We begin with the raw amino-acid sequence, 543 residues long: Neurofilament light polypeptide (543 aa).

Ser-2 is modified (N-acetylserine). Positions 2–92 (SSFSYEPYYS…LKSIRTQEKA (91 aa)) are head. O-linked (GlcNAc) threonine glycosylation occurs at Thr-21. Arg-23 carries the post-translational modification Asymmetric dimethylarginine; alternate. Arg-23 is subject to Omega-N-methylarginine; alternate. O-linked (GlcNAc) serine glycosylation is present at Ser-27. Arg-30 carries the omega-N-methylarginine modification. At Tyr-43 the chain carries Phosphotyrosine. Residues Ser-56, Ser-67, and Ser-103 each carry the phosphoserine modification. The IF rod domain occupies 90–400 (EKAQLQDLND…KLLEGEETRL (311 aa)). A coil 1A region spans residues 93–124 (QLQDLNDRFASFIERVHELEQQNKVLEAELLV). Residues 125–137 (LRQKHSEPSRFRA) are linker 1. A coil 1B region spans residues 138–234 (LYEQEIRDLR…KVHEEEIAEL (97 aa)). The interval 235-252 (QAQIQYAQISVEMDVTKP) is linker 12. Residues 253-271 (DLSAALKDIRAQYEKLAAK) are coil 2A. Positions 272–280 (NMQNAEEWF) are linker 2. The tract at residues 281 to 396 (KSRFTVLTES…AAYRKLLEGE (116 aa)) is coil 2B. The epitope; recognized by IF-specific monoclonal antibody stretch occupies residues 381-391 (ALDIEIAAYRK). The tail, subdomain A stretch occupies residues 397–443 (ETRLSFTSVGSITSGYSQSSQVFGRSAYGGLQTSSYLMSTRSFPSYY). Positions 397-543 (ETRLSFTSVG…GEEQAAKKKD (147 aa)) are tail. The tract at residues 444–543 (TSHVQEEQIE…GEEQAAKKKD (100 aa)) is tail, subdomain B (acidic). The disordered stretch occupies residues 462–543 (KAEEAKDEPP…GEEQAAKKKD (82 aa)). A compositionally biased stretch (acidic residues) spans 471 to 525 (PSEGEAEEEEKDKEEAEEEEAAEEEEAAKEESEEAKEEEEGGEGEEGEETKEAEE). A phosphoserine mark is found at Ser-472 and Ser-502. Thr-520 bears the Phosphothreonine mark. Basic and acidic residues predominate over residues 526–543 (EEKKVEGAGEEQAAKKKD).

Belongs to the intermediate filament family. In terms of assembly, forms homodimers (in vitro). Forms heterodimers with NEFH or NEFM; which can further hetero-oligomerize (in vitro). Forms heterodimers with INA (in vitro). Interacts with ARHGEF28. Interacts with TRIM2. In terms of processing, O-glycosylated. Post-translationally, phosphorylated in the head and rod regions by the PKC kinase PKN1, leading to the inhibition of polymerization. Ubiquitinated in the presence of TRIM2 and UBE2D1.

The protein localises to the cell projection. The protein resides in the axon. It is found in the cytoplasm. It localises to the cytoskeleton. Functionally, neurofilaments usually contain three intermediate filament proteins: NEFL, NEFM, and NEFH which are involved in the maintenance of neuronal caliber. May additionally cooperate with the neuronal intermediate filament proteins PRPH and INA to form neuronal filamentous networks. In Homo sapiens (Human), this protein is Neurofilament light polypeptide (NEFL).